Here is a 600-residue protein sequence, read N- to C-terminus: Methionine--tRNA ligase (600 aa).

A 'HIGH' region motif is present at residues 12–22; the sequence is PYANGPRHIGH. Zn(2+)-binding residues include cysteine 144, cysteine 147, cysteine 157, and cysteine 160. The 'KMSKS' region motif lies at 351–355; sequence KFSSS. Serine 354 provides a ligand contact to ATP.

It belongs to the class-I aminoacyl-tRNA synthetase family. MetG type 1 subfamily. Monomer. It depends on Zn(2+) as a cofactor.

The protein resides in the cytoplasm. The catalysed reaction is tRNA(Met) + L-methionine + ATP = L-methionyl-tRNA(Met) + AMP + diphosphate. Is required not only for elongation of protein synthesis but also for the initiation of all mRNA translation through initiator tRNA(fMet) aminoacylation. This chain is Methionine--tRNA ligase, found in Chloroflexus aurantiacus (strain ATCC 29364 / DSM 637 / Y-400-fl).